Consider the following 277-residue polypeptide: Large ribosomal subunit protein uL2 (277 aa).

2 disordered regions span residues 35–58 and 213–277; these read QPLPKRAGRNNQGKLTVRHHGGGH and WKGI…RKRK.

This sequence belongs to the universal ribosomal protein uL2 family. Part of the 50S ribosomal subunit. Forms a bridge to the 30S subunit in the 70S ribosome.

Its function is as follows. One of the primary rRNA binding proteins. Required for association of the 30S and 50S subunits to form the 70S ribosome, for tRNA binding and peptide bond formation. It has been suggested to have peptidyltransferase activity; this is somewhat controversial. Makes several contacts with the 16S rRNA in the 70S ribosome. In Staphylococcus carnosus (strain TM300), this protein is Large ribosomal subunit protein uL2.